Here is a 441-residue protein sequence, read N- to C-terminus: Protein disulfide isomerase-like 2-3 (441 aa).

The signal sequence occupies residues 1-18 (MRPAVAAALLLVAAAVAA). Thioredoxin domains follow at residues 19-139 (SPVS…ALLR) and 159-276 (SEKT…ANAA). Catalysis depends on nucleophile residues Cys-59 and Cys-62. Cys-59 and Cys-62 are joined by a disulfide. The disordered stretch occupies residues 143–166 (NGKTSAGSGGKKSGGSSEKTEPSA). Residues Cys-195 and Cys-198 each act as nucleophile in the active site. A disulfide bridge connects residues Cys-195 and Cys-198.

The protein belongs to the protein disulfide isomerase family.

It is found in the endoplasmic reticulum lumen. The enzyme catalyses Catalyzes the rearrangement of -S-S- bonds in proteins.. In terms of biological role, acts as a protein-folding catalyst that interacts with nascent polypeptides to catalyze the formation, isomerization, and reduction or oxidation of disulfide bonds. May play a role in storage protein biogenesis. The protein is Protein disulfide isomerase-like 2-3 (PDIL2-3) of Oryza sativa subsp. japonica (Rice).